The following is a 259-amino-acid chain: Phosphatidylglycerol--prolipoprotein diacylglyceryl transferase (259 aa).

4 helical membrane passes run 9-29, 55-75, 92-112, and 117-137; these read IIFYLGPLAISWYSLSYVVGI, FITYAVIGIIVGGRLGFVLLY, EGGMSFHGGALGVIIAAYLFC, and VNFLSLTDIIAAVVPIGLFLG. Arg-138 provides a ligand contact to a 1,2-diacyl-sn-glycero-3-phospho-(1'-sn-glycerol). The next 3 helical transmembrane spans lie at 172 to 192, 201 to 221, and 228 to 248; these read QLYEAFFEGLVLFCILAYATF, GLNSGLFLTFYALFRIAIEIF, and IGFILDNLTMGQILSVPMLIL.

Belongs to the Lgt family.

The protein resides in the cell inner membrane. The enzyme catalyses L-cysteinyl-[prolipoprotein] + a 1,2-diacyl-sn-glycero-3-phospho-(1'-sn-glycerol) = an S-1,2-diacyl-sn-glyceryl-L-cysteinyl-[prolipoprotein] + sn-glycerol 1-phosphate + H(+). It functions in the pathway protein modification; lipoprotein biosynthesis (diacylglyceryl transfer). In terms of biological role, catalyzes the transfer of the diacylglyceryl group from phosphatidylglycerol to the sulfhydryl group of the N-terminal cysteine of a prolipoprotein, the first step in the formation of mature lipoproteins. In Rickettsia akari (strain Hartford), this protein is Phosphatidylglycerol--prolipoprotein diacylglyceryl transferase.